We begin with the raw amino-acid sequence, 122 residues long: Beta-2-microglobulin (122 aa).

The signal sequence occupies residues 1–22 (MMARIFILALLGQLCFLPYLDA). Residues 27 to 115 (PKVQVYSRHP…HLTLQEPKVV (89 aa)) form the Ig-like C1-type domain. A disulfide bridge connects residues C47 and C102.

The protein belongs to the beta-2-microglobulin family. In terms of assembly, heterodimer of an alpha chain and a beta chain. Beta-2-microglobulin is the beta-chain of major histocompatibility complex class I molecules.

The protein resides in the secreted. Functionally, component of the class I major histocompatibility complex (MHC). Involved in the presentation of peptide antigens to the immune system. This Trichosurus vulpecula (Brush-tailed possum) protein is Beta-2-microglobulin (B2M).